A 569-amino-acid chain; its full sequence is Urease subunit alpha (569 aa).

A Urease domain is found at 132-569 (GGIDSHIHFI…LPLAQRYFLF (438 aa)). Histidine 137, histidine 139, and lysine 220 together coordinate Ni(2+). Lysine 220 carries the post-translational modification N6-carboxylysine. Histidine 222 is a substrate binding site. Ni(2+) contacts are provided by histidine 249 and histidine 275. Histidine 323 (proton donor) is an active-site residue. Aspartate 363 contributes to the Ni(2+) binding site.

It belongs to the metallo-dependent hydrolases superfamily. Urease alpha subunit family. As to quaternary structure, heterotrimer of UreA (gamma), UreB (beta) and UreC (alpha) subunits. Three heterotrimers associate to form the active enzyme. Ni cation serves as cofactor. In terms of processing, carboxylation allows a single lysine to coordinate two nickel ions.

The protein localises to the cytoplasm. It catalyses the reaction urea + 2 H2O + H(+) = hydrogencarbonate + 2 NH4(+). It functions in the pathway nitrogen metabolism; urea degradation; CO(2) and NH(3) from urea (urease route): step 1/1. The chain is Urease subunit alpha from Dechloromonas aromatica (strain RCB).